Consider the following 165-residue polypeptide: Pyruvoyl-dependent arginine decarboxylase 1 (165 aa).

Pyruvic acid (Ser) is present on serine 45.

Belongs to the PdaD family. Requires pyruvate as cofactor.

It catalyses the reaction L-arginine + H(+) = agmatine + CO2. The polypeptide is Pyruvoyl-dependent arginine decarboxylase 1 (pdaD1) (Methanosarcina acetivorans (strain ATCC 35395 / DSM 2834 / JCM 12185 / C2A)).